A 462-amino-acid polypeptide reads, in one-letter code: Siroheme synthase (462 aa).

Residues 1–203 (MEYLPLFANL…GKWEHAEKEI (203 aa)) are precorrin-2 dehydrogenase /sirohydrochlorin ferrochelatase. NAD(+) contacts are provided by residues 22 to 23 (NV) and 43 to 44 (DD). S128 carries the phosphoserine modification. A uroporphyrinogen-III C-methyltransferase region spans residues 215–462 (GNVALVGAGP…NWFGKIIKEQ (248 aa)). P224 contacts S-adenosyl-L-methionine. D247 (proton acceptor) is an active-site residue. K269 acts as the Proton donor in catalysis. Residues 300-302 (GGD), I305, 330-331 (TA), M383, and G412 each bind S-adenosyl-L-methionine.

The protein in the N-terminal section; belongs to the precorrin-2 dehydrogenase / sirohydrochlorin ferrochelatase family. It in the C-terminal section; belongs to the precorrin methyltransferase family.

The enzyme catalyses uroporphyrinogen III + 2 S-adenosyl-L-methionine = precorrin-2 + 2 S-adenosyl-L-homocysteine + H(+). It catalyses the reaction precorrin-2 + NAD(+) = sirohydrochlorin + NADH + 2 H(+). The catalysed reaction is siroheme + 2 H(+) = sirohydrochlorin + Fe(2+). It functions in the pathway cofactor biosynthesis; adenosylcobalamin biosynthesis; precorrin-2 from uroporphyrinogen III: step 1/1. The protein operates within cofactor biosynthesis; adenosylcobalamin biosynthesis; sirohydrochlorin from precorrin-2: step 1/1. It participates in porphyrin-containing compound metabolism; siroheme biosynthesis; precorrin-2 from uroporphyrinogen III: step 1/1. Its pathway is porphyrin-containing compound metabolism; siroheme biosynthesis; siroheme from sirohydrochlorin: step 1/1. It functions in the pathway porphyrin-containing compound metabolism; siroheme biosynthesis; sirohydrochlorin from precorrin-2: step 1/1. In terms of biological role, multifunctional enzyme that catalyzes the SAM-dependent methylations of uroporphyrinogen III at position C-2 and C-7 to form precorrin-2 via precorrin-1. Then it catalyzes the NAD-dependent ring dehydrogenation of precorrin-2 to yield sirohydrochlorin. Finally, it catalyzes the ferrochelation of sirohydrochlorin to yield siroheme. The chain is Siroheme synthase from Baumannia cicadellinicola subsp. Homalodisca coagulata.